We begin with the raw amino-acid sequence, 439 residues long: Lipid-A-disaccharide synthase (439 aa).

The protein belongs to the LpxB family.

It carries out the reaction a lipid X + a UDP-2-N,3-O-bis[(3R)-3-hydroxyacyl]-alpha-D-glucosamine = a lipid A disaccharide + UDP + H(+). Its pathway is bacterial outer membrane biogenesis; LPS lipid A biosynthesis. Its function is as follows. Condensation of UDP-2,3-diacylglucosamine and 2,3-diacylglucosamine-1-phosphate to form lipid A disaccharide, a precursor of lipid A, a phosphorylated glycolipid that anchors the lipopolysaccharide to the outer membrane of the cell. This chain is Lipid-A-disaccharide synthase, found in Xanthomonas axonopodis pv. citri (strain 306).